The following is a 225-amino-acid chain: Orotidine 5'-phosphate decarboxylase (225 aa).

Residues D9, K31, 58–67, T115, R176, Q184, G204, and R205 each bind substrate; that span reads DLKLHDIPNT. K60 functions as the Proton donor in the catalytic mechanism.

Belongs to the OMP decarboxylase family. Type 1 subfamily. Homodimer.

It catalyses the reaction orotidine 5'-phosphate + H(+) = UMP + CO2. It functions in the pathway pyrimidine metabolism; UMP biosynthesis via de novo pathway; UMP from orotate: step 2/2. Functionally, catalyzes the decarboxylation of orotidine 5'-monophosphate (OMP) to uridine 5'-monophosphate (UMP). The protein is Orotidine 5'-phosphate decarboxylase of Wolbachia sp. subsp. Brugia malayi (strain TRS).